We begin with the raw amino-acid sequence, 310 residues long: Homoserine kinase (310 aa).

91 to 101 (PLARGLGSSAA) provides a ligand contact to ATP.

It belongs to the GHMP kinase family. Homoserine kinase subfamily.

It is found in the cytoplasm. It catalyses the reaction L-homoserine + ATP = O-phospho-L-homoserine + ADP + H(+). It functions in the pathway amino-acid biosynthesis; L-threonine biosynthesis; L-threonine from L-aspartate: step 4/5. In terms of biological role, catalyzes the ATP-dependent phosphorylation of L-homoserine to L-homoserine phosphate. This Bacillus pumilus (strain SAFR-032) protein is Homoserine kinase.